The sequence spans 141 residues: MAKKIVAVIKLALQAGKANPAPPVGPALGQHGVNIMAFCKEYNAKTQDKAGFVIPVEISVFEDRSFTFITKTPPAAVLITKAAGIDKGSGESSKGSVGNISKAQLEEIAKTKLPDLNCSSVESAMKVIEGTARNMGVSITD.

Belongs to the universal ribosomal protein uL11 family. As to quaternary structure, part of the ribosomal stalk of the 50S ribosomal subunit. Interacts with L10 and the large rRNA to form the base of the stalk. L10 forms an elongated spine to which L12 dimers bind in a sequential fashion forming a multimeric L10(L12)X complex. One or more lysine residues are methylated.

Its function is as follows. Forms part of the ribosomal stalk which helps the ribosome interact with GTP-bound translation factors. The polypeptide is Large ribosomal subunit protein uL11 (Prochlorococcus marinus (strain MIT 9312)).